Here is a 194-residue protein sequence, read N- to C-terminus: Protein LURP-one-related 10 (194 aa).

Belongs to the LOR family.

Might be related to the phospholipid scramblase and tubby-like superfamily of membrane tethered transcription factors. The polypeptide is Protein LURP-one-related 10 (Arabidopsis thaliana (Mouse-ear cress)).